The primary structure comprises 166 residues: NAD(P)H-quinone oxidoreductase subunit I, chloroplastic (166 aa).

2 consecutive 4Fe-4S ferredoxin-type domains span residues 55–84 (GRIH…VDWK) and 95–124 (LNYS…MTEE). Residues Cys64, Cys67, Cys70, Cys74, Cys104, Cys107, Cys110, and Cys114 each contribute to the [4Fe-4S] cluster site.

It belongs to the complex I 23 kDa subunit family. In terms of assembly, NDH is composed of at least 16 different subunits, 5 of which are encoded in the nucleus. The cofactor is [4Fe-4S] cluster.

The protein localises to the plastid. The protein resides in the chloroplast thylakoid membrane. The catalysed reaction is a plastoquinone + NADH + (n+1) H(+)(in) = a plastoquinol + NAD(+) + n H(+)(out). The enzyme catalyses a plastoquinone + NADPH + (n+1) H(+)(in) = a plastoquinol + NADP(+) + n H(+)(out). In terms of biological role, NDH shuttles electrons from NAD(P)H:plastoquinone, via FMN and iron-sulfur (Fe-S) centers, to quinones in the photosynthetic chain and possibly in a chloroplast respiratory chain. The immediate electron acceptor for the enzyme in this species is believed to be plastoquinone. Couples the redox reaction to proton translocation, and thus conserves the redox energy in a proton gradient. This chain is NAD(P)H-quinone oxidoreductase subunit I, chloroplastic, found in Enydra sessilis (Smallray swampwort).